The primary structure comprises 154 residues: General odorant-binding protein 83a (154 aa).

The first 33 residues, 1–33 (MALNGFGRRVSASVLLIALSLLSGALILPPAAA), serve as a signal peptide directing secretion. Cystine bridges form between cysteine 55–cysteine 86, cysteine 82–cysteine 133, and cysteine 124–cysteine 142.

It belongs to the PBP/GOBP family. In terms of tissue distribution, in the ventrolateral region of the antenna, expressed in two distinct types of olfactory hairs: in most sensilla trichodea and in a subset of the small sensilla basiconica (at protein level).

It is found in the secreted. This Drosophila melanogaster (Fruit fly) protein is General odorant-binding protein 83a (Obp83a).